The primary structure comprises 345 residues: Nicotinate-nucleotide--dimethylbenzimidazole phosphoribosyltransferase (345 aa).

E312 acts as the Proton acceptor in catalysis.

This sequence belongs to the CobT family.

The enzyme catalyses 5,6-dimethylbenzimidazole + nicotinate beta-D-ribonucleotide = alpha-ribazole 5'-phosphate + nicotinate + H(+). Its pathway is nucleoside biosynthesis; alpha-ribazole biosynthesis; alpha-ribazole from 5,6-dimethylbenzimidazole: step 1/2. Functionally, catalyzes the synthesis of alpha-ribazole-5'-phosphate from nicotinate mononucleotide (NAMN) and 5,6-dimethylbenzimidazole (DMB). This Bacteroides fragilis (strain ATCC 25285 / DSM 2151 / CCUG 4856 / JCM 11019 / LMG 10263 / NCTC 9343 / Onslow / VPI 2553 / EN-2) protein is Nicotinate-nucleotide--dimethylbenzimidazole phosphoribosyltransferase.